A 156-amino-acid chain; its full sequence is Ribonuclease H (156 aa).

Residues 3–144 (ELKQIRIYTD…CDTLAREAAE (142 aa)) form the RNase H type-1 domain. Mg(2+)-binding residues include D12, E50, D72, and D136.

It belongs to the RNase H family. As to quaternary structure, monomer. Requires Mg(2+) as cofactor.

It is found in the cytoplasm. It catalyses the reaction Endonucleolytic cleavage to 5'-phosphomonoester.. In terms of biological role, endonuclease that specifically degrades the RNA of RNA-DNA hybrids. This Shewanella amazonensis (strain ATCC BAA-1098 / SB2B) protein is Ribonuclease H.